The primary structure comprises 437 residues: Major royal jelly protein 6 (437 aa).

Positions methionine 1–serine 20 are cleaved as a signal peptide. N-linked (GlcNAc...) asparagine glycans are attached at residues asparagine 78, asparagine 164, asparagine 181, asparagine 201, and asparagine 324.

This sequence belongs to the major royal jelly protein family. In terms of tissue distribution, found in and secreted from the hypopharyngeal glands of the worker honey bee (at protein level); expression peaks at 20 days post eclosion. Expressed in the spermatheca of adult queen bees (at protein level); Expression levels are higher in mated queens than in virgin queens. Expressed at low level in the brains of adult worker bees. Protein abundance does not seem to correlate with transcript abundance.

It localises to the secreted. In terms of biological role, component of royal jelly, a substance produced in the hypopharyngeal gland containing proteins, free amino acids, fatty acids, sugars and other nutrients, which is fed to developing larvae by worker nurse bees. All larvae are fed some royal jelly (also known as worker jelly) early in their development but it forms the principal source of nutrition for larvae destined to become queen bees. Produced in the spermatheca of adult queen bees, along with other major royal jelly proteins, where it may act as a nutrient supply for sperm stored by mated queens, or be involved in energy metabolism. This Apis mellifera (Honeybee) protein is Major royal jelly protein 6.